We begin with the raw amino-acid sequence, 196 residues long: Probable GTP-binding protein EngB (196 aa).

An EngB-type G domain is found at Asp-21 to Ser-195. GTP-binding positions include Gly-29–Ser-36, Gly-56–Leu-60, Asp-75–Gly-78, Thr-142–Asp-145, and Ile-174–Asn-176. Mg(2+) is bound by residues Ser-36 and Thr-58.

Belongs to the TRAFAC class TrmE-Era-EngA-EngB-Septin-like GTPase superfamily. EngB GTPase family. It depends on Mg(2+) as a cofactor.

Functionally, necessary for normal cell division and for the maintenance of normal septation. This chain is Probable GTP-binding protein EngB, found in Mycoplasma capricolum subsp. capricolum (strain California kid / ATCC 27343 / NCTC 10154).